Consider the following 1144-residue polypeptide: Type II inositol polyphosphate 5-phosphatase 14 (1144 aa).

Disordered regions lie at residues 15–67 (ASLV…FDSS) and 81–118 (GRTS…DDIE). 5 WD repeats span residues 158-196 (ETQT…EVGC), 216-255 (VPTS…TTTA), 269-307 (AHRG…KSLV), 445-483 (EDTR…LREV), and 524-561 (SHNE…PLDS). Catalytic regions lie at residues 791 to 807 (DLVA…FGIT) and 870 to 885 (KKRI…YRDN). A Glycyl lysine isopeptide (Lys-Gly) (interchain with G-Cter in ubiquitin) cross-link involves residue Lys949. A compositionally biased stretch (polar residues) spans 1111 to 1131 (TTMTKNLEGSTRYQTDANRGG). The interval 1111–1144 (TTMTKNLEGSTRYQTDANRGGSTRHRTDDSTRRG) is disordered. Residues 1135 to 1144 (HRTDDSTRRG) are compositionally biased toward basic and acidic residues.

It belongs to the inositol polyphosphate 5-phosphatase family. Requires Mg(2+) as cofactor. In terms of tissue distribution, expressed in young seedlings and flowers.

It carries out the reaction a 1,2-diacyl-sn-glycero-3-phospho-(1D-myo-inositol-4,5-bisphosphate) + H2O = a 1,2-diacyl-sn-glycero-3-phospho-(1D-myo-inositol 4-phosphate) + phosphate. The catalysed reaction is a 1,2-diacyl-sn-glycero-3-phospho-(1D-myo-inositol-3,4,5-trisphosphate) + H2O = a 1,2-diacyl-sn-glycero-3-phospho-(1D-myo-inositol-3,4-bisphosphate) + phosphate. The enzyme catalyses 1D-myo-inositol 1,4,5-trisphosphate + H2O = 1D-myo-inositol 1,4-bisphosphate + phosphate. In terms of biological role, has phosphatase activity toward PtdIns(4,5)P2, PtdIns(3,4,5)P3 and Ins(1,4,5)P3. The polypeptide is Type II inositol polyphosphate 5-phosphatase 14 (Arabidopsis thaliana (Mouse-ear cress)).